We begin with the raw amino-acid sequence, 397 residues long: Protein PEP-RELATED DEVELOPMENT ARRESTED 1, chloroplastic (397 aa).

Residues 1-52 constitute a chloroplast transit peptide; sequence MLQSIHLRFSSTPSPSKRESLIIPSVICSFPFTSSSFRPKQTQKLKRLVQFC. Residues 315–334 show a composition bias toward basic and acidic residues; that stretch reads KDEGADNLSKEDDSSTEGRK. Residues 315–351 are disordered; that stretch reads KDEGADNLSKEDDSSTEGRKPSGLNGRGSVTGRKPLP.

In terms of assembly, interacts with FSD2 and MRL7. Highly expressed in young leaves, shoots and flowers. Expressed at low levels in stems and siliques.

It is found in the plastid. The protein resides in the chloroplast stroma. It localises to the chloroplast nucleoid. In terms of biological role, plays an essential role in early steps of chloroplast development. May be involved in the redox control of plastid gene expression by maintening the redox state around chloroplast nucleoids. May positively regulate plastid-encoded RNA polymerase (PEP) activity, through binding to FSD2. The sequence is that of Protein PEP-RELATED DEVELOPMENT ARRESTED 1, chloroplastic (PRDA1) from Arabidopsis thaliana (Mouse-ear cress).